The sequence spans 1106 residues: Protein transport protein Sec31A (1106 aa).

7 WD repeats span residues 4–47 (KEVD…EIFE), 68–111 (RYHK…AGDK), 120–160 (KHTG…TPMT), 166–206 (QPPE…PIIK), 209–254 (DHSN…SPLR), 258–298 (NHAR…VLYE), and 301–342 (TNTQ…DGLR). Residues 161–471 (PGAKTQPPED…IDASQTEFEK (311 aa)) are interaction with SEC13. The WD 8; interaction with SEC13 repeat unit spans residues 397–430 (SFSFGGKLVTFENVRMPSHQGAEQQQQQHHVFIS). A phosphoserine mark is found at Ser527 and Ser532. A Glycyl lysine isopeptide (Lys-Gly) (interchain with G-Cter in ubiquitin) cross-link involves residue Lys647. Ser799 is modified (phosphoserine). The interaction with PDCD6 stretch occupies residues 800-999 (PKIPYEEQQL…TKKITKKPIP (200 aa)). The ALG-2-binding site motif-2 (ABS-2) signature appears at 842–848 (GFIMHGN). The disordered stretch occupies residues 859–980 (TSPGHMHTQV…EGAPGAPIGN (122 aa)). A compositionally biased stretch (polar residues) spans 917–939 (PQSQMLQQQPSAPVPLSSQSSFP). Thr1047 bears the Phosphothreonine mark. Ser1049 bears the Phosphoserine mark. Lys1103 participates in a covalent cross-link: Glycyl lysine isopeptide (Lys-Gly) (interchain with G-Cter in ubiquitin).

It belongs to the WD repeat SEC31 family. In terms of assembly, COPII is composed of at least 5 proteins: the SEC23/24 complex, the SEC13/31 complex and SAR1. SEC13 and SEC31 make a 2:2 tetramer that forms the edge element of the COPII outer coat. The tetramer self-assembles in multiple copies to form the complete polyhedral cage. Interacts (via WD 8) with SEC13. Interacts with PDCD6; interaction takes place in response to cytosolic calcium increase and leads to bridge together the BCR(KLHL12) complex and SEC31A, leading to monoubiquitination. Interacts with KLHL12. In terms of processing, monoubiquitinated by the BCR(KLHL12) E3 ubiquitin ligase complex, leading to regulate the size of COPII coats.

It is found in the cytoplasm. It localises to the cytoplasmic vesicle. The protein resides in the COPII-coated vesicle membrane. Its subcellular location is the endoplasmic reticulum membrane. Component of the coat protein complex II (COPII) which promotes the formation of transport vesicles from the endoplasmic reticulum (ER). The coat has two main functions, the physical deformation of the endoplasmic reticulum membrane into vesicles and the selection of cargo molecules. The polypeptide is Protein transport protein Sec31A (SEC31A) (Pongo abelii (Sumatran orangutan)).